The chain runs to 399 residues: CCA-adding enzyme (399 aa).

Residues G32 and R35 each contribute to the ATP site. CTP is bound by residues G32 and R35. Positions 45 and 47 each coordinate Mg(2+). ATP contacts are provided by R116, D159, R162, R165, and R168. CTP contacts are provided by R116, D159, R162, R165, and R168.

It belongs to the tRNA nucleotidyltransferase/poly(A) polymerase family. Bacterial CCA-adding enzyme type 3 subfamily. As to quaternary structure, homodimer. Requires Mg(2+) as cofactor.

The catalysed reaction is a tRNA precursor + 2 CTP + ATP = a tRNA with a 3' CCA end + 3 diphosphate. It carries out the reaction a tRNA with a 3' CCA end + 2 CTP + ATP = a tRNA with a 3' CCACCA end + 3 diphosphate. Catalyzes the addition and repair of the essential 3'-terminal CCA sequence in tRNAs without using a nucleic acid template. Adds these three nucleotides in the order of C, C, and A to the tRNA nucleotide-73, using CTP and ATP as substrates and producing inorganic pyrophosphate. tRNA 3'-terminal CCA addition is required both for tRNA processing and repair. Also involved in tRNA surveillance by mediating tandem CCA addition to generate a CCACCA at the 3' terminus of unstable tRNAs. While stable tRNAs receive only 3'-terminal CCA, unstable tRNAs are marked with CCACCA and rapidly degraded. This Streptococcus pneumoniae (strain CGSP14) protein is CCA-adding enzyme.